We begin with the raw amino-acid sequence, 331 residues long: FMRFamide-related neuropeptides (331 aa).

Residues 1–25 form the signal peptide; that stretch reads MRCWSPCSLLVVIVIYCLSSHTSEA. Residues 26 to 65 constitute a propeptide that is removed on maturation; that stretch reads FDLAQACVESQRLSLLPICDTIFAVQQEGVQQSADDGMRS. A phenylalanine amide mark is found at phenylalanine 71 and phenylalanine 83. Residues 86–94 constitute a propeptide that is removed on maturation; that stretch reads NVPDLPFED. Position 100 is a phenylalanine amide (phenylalanine 100). A propeptide spanning residues 103–168 is cleaved from the precursor; it reads AAPQLDELLK…YIDDVEDSDV (66 aa). Positions 122–158 are disordered; it reads QKADETSVRRKRSTDAAPQNNAENPEQKNDSAKITKR. The span at 146–158 shows a compositional bias: basic and acidic residues; that stretch reads PEQKNDSAKITKR. Residues phenylalanine 174 and phenylalanine 181 each carry the phenylalanine amide modification. The propeptide occupies 184-194; the sequence is NPSDVGNKLTE. The residue at position 200 (phenylalanine 200) is a Phenylalanine amide. Residues 203–205 constitute a propeptide that is removed on maturation; that stretch reads DPE. At phenylalanine 211 the chain carries Phenylalanine amide. Residues 214-216 constitute a propeptide that is removed on maturation; sequence SDD. Phenylalanine 222 is modified (phenylalanine amide). The propeptide occupies 225–236; sequence NPSDAEDELEED. Phenylalanine 242 is subject to Phenylalanine amide. Positions 245–254 are excised as a propeptide; sequence GGEDDEEEAE. Phenylalanine 260 carries the post-translational modification Phenylalanine amide. Residues 263–265 constitute a propeptide that is removed on maturation; it reads DPE. Phenylalanine 271 carries the phenylalanine amide modification. Residues 274-277 constitute a propeptide that is removed on maturation; it reads SGED. The span at 279-296 shows a compositional bias: basic and acidic residues; that stretch reads RFMRFGRNPDEQEADKRF. The disordered stretch occupies residues 279 to 310; the sequence is RFMRFGRNPDEQEADKRFMRFGRGGEDDEVST. At phenylalanine 283 the chain carries Phenylalanine amide. A propeptide spanning residues 286 to 293 is cleaved from the precursor; that stretch reads NPDEQEAD. Phenylalanine 299 is modified (phenylalanine amide). Positions 302-312 are excised as a propeptide; sequence GGEDDEVSTED. Phenylalanine 318 is modified (phenylalanine amide). Positions 321-331 are excised as a propeptide; that stretch reads SADKCKGCLEG.

It belongs to the FARP (FMRFamide related peptide) family.

The protein localises to the secreted. Functionally, excitatory neurotransmitters that directly modulate chromatophore function by activating chromatophore expansion at the chromatophore neuromuscular junction. This is FMRFamide-related neuropeptides from Doryteuthis opalescens (California market squid).